A 451-amino-acid polypeptide reads, in one-letter code: Mannan endo-1,6-alpha-mannosidase DFG5 (451 aa).

Residues 1-21 (MVSLQQLTISILLLFTASVQS) form the signal peptide. N-linked (GlcNAc...) asparagine glycans are attached at residues Asn86, Asn111, Asn135, Asn203, Asn243, Asn268, and Asn402. The GPI-anchor amidated alanine moiety is linked to residue Ala429. A propeptide spans 430–451 (GAGVLTAIVLAVILGGAIWMIF) (removed in mature form).

This sequence belongs to the glycosyl hydrolase 76 family. Post-translationally, the GPI-anchor is attached to the protein in the endoplasmic reticulum and serves to target the protein to the cell surface. There, the glucosamine-inositol phospholipid moiety is cleaved off and the GPI-modified mannoprotein is covalently attached via its lipidless GPI glycan remnant to the 1,6-beta-glucan of the outer cell wall layer. N-mannosylated.

It localises to the secreted. The protein localises to the cell wall. The protein resides in the cell membrane. The enzyme catalyses Random hydrolysis of (1-&gt;6)-alpha-D-mannosidic linkages in unbranched (1-&gt;6)-mannans.. Required for normal synthesis of the cell wall and alkaline pH-induced hypha formation. This Candida albicans (strain SC5314 / ATCC MYA-2876) (Yeast) protein is Mannan endo-1,6-alpha-mannosidase DFG5 (DFG5).